A 440-amino-acid chain; its full sequence is Tetratricopeptide repeat protein 5 (440 aa).

5 TPR repeats span residues 7–61 (EEVK…EEVV), 68–98 (AQVL…AVKL), 103–130 (VEAW…SGAL), 136–174 (KVSL…AVQM), and 179–216 (GRSW…AEKV). The Nuclear export signal motif lies at 13–24 (LQKLQELVDQLY). S203 is modified (phosphoserine; by ATM). Phosphoserine; by CHEK2 is present on S221. The TPR 6 repeat unit spans residues 224–253 (PDLHLNRATLHKYEESYGEALEGFSRAAAL). Residues 285-287 (KTK) are mediates interaction with 28S rRNA of ribosome-coding tubulin.

As to quaternary structure, interacts with JMY and p300/EP300; the interaction occurs in the nucleus and augments the association between JMY and p300/EP300 in response to DNA damage. Forms a complex with HSF1 and p300/EP300; these interactions augment chromatin-bound HSF1 and p300/EP300 histone acetyltransferase activity, resulting in enhanced heat-shock-responsive transcription. Interacts with PRMT5; the interaction is DNA damage-dependent and promotes PRMT5 interaction with p53/TP53 and subsequent methylation. Interacts with JMY; the interaction occurs in the cytoplasm and results in the inhibition of JYM's nucleation activity. Interacts with ribosome-coding tubulin (via 60S subunit 28S rRNA and protein uL24/RPL26) and the N-terminal of nascent tubulin polypeptide (via alpha-tubulin MREC motif and beta-tubulin MREI motif); these interactions result in tubulin mRNA-targeted degradation. Interacts with ATP5F1B; the interaction occurs in the mitochondria and results in ATP production decrease. Interacts with p53/TP53; the interaction occurs in the mitochondria and results in increased apoptosis. Phosphorylation by ATM kinase induces nuclear accumulation while interfering with nuclear export, and phosphorylation by CHEK2 kinase enhances nuclear stability.

It is found in the nucleus. The protein resides in the cytoplasm. The protein localises to the cytoplasmic vesicle. It localises to the mitochondrion matrix. Functionally, cofactor involved in the regulation of various cellular mechanisms such as actin regulation, autophagy, chromatin regulation and DNA repair. In non-stress conditions, interacts with cofactor JMY in the cytoplasm which prevents JMY's actin nucleation activity and ability to activate the Arp2/3 complex. Acts as a negative regulator of nutrient stress-induced autophagy by preventing JMY's interaction with MAP1LC3B, thereby preventing autophagosome formation. Involves in tubulin autoregulation by promoting its degradation in response to excess soluble tubulin. To do so, associates with the active ribosome near the ribosome exit tunnel and with nascent tubulin polypeptides early during their translation, triggering tubulin mRNA-targeted degradation. Following DNA damage, phosphorylated by DNA damage responsive protein kinases ATM and CHEK2, leading to its nuclear accumulation and stability. Nuclear TTC5/STRAP promotes the assembly of a stress-responsive p53/TP53 coactivator complex, which includes the coactivators JMY and p300, thereby increasing p53/TP53-dependent transcription and apoptosis. Also recruits arginine methyltransferase PRMT5 to p53/TP53 when DNA is damaged, allowing PRMT5 to methylate p53/TP53. In DNA stress conditions, also prevents p53/TP53 degradation by E3 ubiquitin ligase MDM2. Upon heat-shock stress, forms a chromatin-associated complex with heat-shock factor 1 HSF1 and p300/EP300 to stimulate heat-shock-responsive transcription, thereby increasing cell survival. Mitochondrial TTC5/STRAP interacts with ATP synthase subunit beta ATP5F1B which decreased ATP synthase activity and lowers mitochondrial ATP production, thereby regulating cellular respiration and mitochondrial-dependent apoptosis. Mitochondrial TTC5/STRAP also regulates p53/TP53-mediated apoptosis. This chain is Tetratricopeptide repeat protein 5, found in Homo sapiens (Human).